The chain runs to 233 residues: Orotidine 5'-phosphate decarboxylase (233 aa).

Residues Asp-13, Lys-35, 62–71 (DLKFHDIPNT), Thr-122, Arg-182, Gln-191, Gly-211, and Arg-212 each bind substrate. Residue Lys-64 is the Proton donor of the active site.

The protein belongs to the OMP decarboxylase family. Type 1 subfamily. Homodimer.

The enzyme catalyses orotidine 5'-phosphate + H(+) = UMP + CO2. The protein operates within pyrimidine metabolism; UMP biosynthesis via de novo pathway; UMP from orotate: step 2/2. Catalyzes the decarboxylation of orotidine 5'-monophosphate (OMP) to uridine 5'-monophosphate (UMP). This Pseudomonas putida (strain W619) protein is Orotidine 5'-phosphate decarboxylase.